A 392-amino-acid polypeptide reads, in one-letter code: S-adenosylmethionine synthase (392 aa).

His20 contacts ATP. Asp22 is a Mg(2+) binding site. Glu48 lines the K(+) pocket. 2 residues coordinate L-methionine: Glu61 and Gln106. Positions 106 to 116 (QSQDIINAIKK) are flexible loop. Residues 171-173 (DSK), Asp248, 254-255 (RK), Ala271, and Lys275 contribute to the ATP site. L-methionine is bound at residue Asp248. Lys279 provides a ligand contact to L-methionine.

The protein belongs to the AdoMet synthase family. As to quaternary structure, homotetramer; dimer of dimers. Mg(2+) serves as cofactor. It depends on K(+) as a cofactor.

The protein localises to the cytoplasm. It catalyses the reaction L-methionine + ATP + H2O = S-adenosyl-L-methionine + phosphate + diphosphate. It participates in amino-acid biosynthesis; S-adenosyl-L-methionine biosynthesis; S-adenosyl-L-methionine from L-methionine: step 1/1. Its function is as follows. Catalyzes the formation of S-adenosylmethionine (AdoMet) from methionine and ATP. The overall synthetic reaction is composed of two sequential steps, AdoMet formation and the subsequent tripolyphosphate hydrolysis which occurs prior to release of AdoMet from the enzyme. This chain is S-adenosylmethionine synthase, found in Borrelia garinii subsp. bavariensis (strain ATCC BAA-2496 / DSM 23469 / PBi) (Borreliella bavariensis).